The primary structure comprises 129 residues: Large ribosomal subunit protein bL17 (129 aa).

It belongs to the bacterial ribosomal protein bL17 family. Part of the 50S ribosomal subunit. Contacts protein L32.

In Polynucleobacter asymbioticus (strain DSM 18221 / CIP 109841 / QLW-P1DMWA-1) (Polynucleobacter necessarius subsp. asymbioticus), this protein is Large ribosomal subunit protein bL17.